The chain runs to 436 residues: T-box transcription factor TBX6 (436 aa).

Positions leucine 100–glutamate 273 form a DNA-binding region, T-box. Residues asparagine 274–alanine 284 are compositionally biased toward basic and acidic residues. 2 disordered regions span residues asparagine 274 to proline 339 and proline 360 to serine 379. The segment covering glutamate 325–proline 339 has biased composition (low complexity).

Forms a dimeric complex with DNA (in vitro).

The protein resides in the nucleus. Functionally, T-box transcription factor that plays an essential role in the determination of the fate of axial stem cells: neural vs mesodermal. Acts in part by down-regulating, a specific enhancer (N1) of SOX2, to inhibit neural development. Seems to play also an essential role in left/right axis determination and acts through effects on Notch signaling around the node as well as through an effect on the morphology and motility of the nodal cilia. In Gorilla gorilla gorilla (Western lowland gorilla), this protein is T-box transcription factor TBX6 (TBX6).